The chain runs to 91 residues: Molybdopterin synthase sulfur carrier subunit (91 aa).

Residue Gly91 is modified to 1-thioglycine; alternate. Position 91 is a glycyl adenylate; alternate (Gly91).

Belongs to the MoaD family. MOCS2A subfamily. Heterotetramer; composed of 2 small (MOCS2A) and 2 large (MOCS2B) subunits. C-terminal thiocarboxylation occurs in 2 steps, it is first acyl-adenylated (-COAMP) via the hesA/moeB/thiF part of MOCS3, then thiocarboxylated (-COSH) via the rhodanese domain of MOCS3.

Its subcellular location is the cytoplasm. The protein operates within cofactor biosynthesis; molybdopterin biosynthesis. In terms of biological role, acts as a sulfur carrier required for molybdopterin biosynthesis. Component of the molybdopterin synthase complex that catalyzes the conversion of precursor Z into molybdopterin by mediating the incorporation of 2 sulfur atoms into precursor Z to generate a dithiolene group. In the complex, serves as sulfur donor by being thiocarboxylated (-COSH) at its C-terminus by MOCS3. After interaction with MOCS2B, the sulfur is then transferred to precursor Z to form molybdopterin. The chain is Molybdopterin synthase sulfur carrier subunit from Anopheles gambiae (African malaria mosquito).